The chain runs to 191 residues: MSAPSQARHIVNFITGNANKLGEVKAILEPAIQVENQALDLLEIQGTLEEVTLDKCRRAADLVQGPVLVEDTCLCFNALKGLPGPYIKWFMNSLGHEGLNNLLAAYEDKSAKAVCTFGYSAGPGHEPILFQGITDGKIVPPRGPPNFGWDAIFEYEGQTYAEMDKAEKNKISHRAKALAKLQEWFAKEMTA.

An ITP-binding site is contributed by 15–20 (TGNANK). Glu43 serves as a coordination point for Mg(2+). ITP contacts are provided by residues Lys55, 71-72 (DT), Lys88, 147-150 (FGWD), Lys168, and 173-174 (HR).

It belongs to the HAM1 NTPase family. In terms of assembly, homodimer. Requires Mg(2+) as cofactor. Mn(2+) serves as cofactor.

The protein localises to the cytoplasm. It localises to the nucleus. It catalyses the reaction ITP + H2O = IMP + diphosphate + H(+). The catalysed reaction is dITP + H2O = dIMP + diphosphate + H(+). It carries out the reaction XTP + H2O = XMP + diphosphate + H(+). Pyrophosphatase that hydrolyzes non-canonical purine nucleotides such as inosine triphosphate (ITP), deoxyinosine triphosphate (dITP) or xanthosine 5'-triphosphate (XTP) to their respective monophosphate derivatives. The enzyme does not distinguish between the deoxy- and ribose forms. Probably excludes non-canonical purines from RNA and DNA precursor pools, thus preventing their incorporation into RNA and DNA and avoiding chromosomal lesions. This Neurospora crassa (strain ATCC 24698 / 74-OR23-1A / CBS 708.71 / DSM 1257 / FGSC 987) protein is Inosine triphosphate pyrophosphatase.